A 258-amino-acid polypeptide reads, in one-letter code: Acetylglutamate kinase (258 aa).

Substrate-binding positions include 44–45 (GG), R66, and N158. ATP-binding positions include 181–186 (DVSGIL) and 209–211 (IIT).

This sequence belongs to the acetylglutamate kinase family. ArgB subfamily. As to quaternary structure, homodimer.

It localises to the cytoplasm. The enzyme catalyses N-acetyl-L-glutamate + ATP = N-acetyl-L-glutamyl 5-phosphate + ADP. The protein operates within amino-acid biosynthesis; L-arginine biosynthesis; N(2)-acetyl-L-ornithine from L-glutamate: step 2/4. Catalyzes the ATP-dependent phosphorylation of N-acetyl-L-glutamate. In Yersinia pestis bv. Antiqua (strain Antiqua), this protein is Acetylglutamate kinase.